The following is a 576-amino-acid chain: Arginine--tRNA ligase (576 aa).

The 'HIGH' region motif lies at 126 to 136 (ANPTGPMHIGH).

Belongs to the class-I aminoacyl-tRNA synthetase family. As to quaternary structure, monomer.

It localises to the cytoplasm. It catalyses the reaction tRNA(Arg) + L-arginine + ATP = L-arginyl-tRNA(Arg) + AMP + diphosphate. This chain is Arginine--tRNA ligase, found in Rickettsia peacockii (strain Rustic).